The following is a 505-amino-acid chain: Prenylcysteine oxidase 1 (505 aa).

A signal peptide spans 1-27 (MGRVVAELVSSLLGLWLLLCSCGCPEG). Residues Asn-196, Asn-323, and Asn-353 are each glycosylated (N-linked (GlcNAc...) asparagine).

Belongs to the prenylcysteine oxidase family. FAD serves as cofactor.

It localises to the lysosome. The catalysed reaction is an S-polyprenyl-L-cysteine + O2 + H2O = a polyprenal + L-cysteine + H2O2. The enzyme catalyses S-(2E,6E)-farnesyl-L-cysteine + O2 + H2O = (2E,6E)-farnesal + L-cysteine + H2O2. It carries out the reaction [(2E,6E,10E)-geranylgeranyl]-L-cysteine + O2 + H2O = (2E,6E,10E)-geranylgeranial + L-cysteine + H2O2. In terms of biological role, prenylcysteine oxidase that cleaves the thioether bond of prenyl-L-cysteines, such as farnesylcysteine and geranylgeranylcysteine. Only active against free prenylcysteines and not prenylcysteine residues within prenylated proteins or peptides. Involved in the final step in the degradation of prenylated proteins, by degrading prenylcysteines after the protein has been degraded. The sequence is that of Prenylcysteine oxidase 1 from Pongo abelii (Sumatran orangutan).